A 59-amino-acid polypeptide reads, in one-letter code: MFTVFLLVVLTITVVSFPSDRASDGRDDEAKDERSDMYKSKRNGRCCHPACGKHFSCGR.

An N-terminal signal peptide occupies residues 1-16 (MFTVFLLVVLTITVVS). Positions 17-42 (FPSDRASDGRDDEAKDERSDMYKSKR) are excised as a propeptide. Cystine bridges form between C46-C51 and C47-C57. At C57 the chain carries Cysteine amide.

Belongs to the conotoxin A superfamily. Expressed by the venom duct.

The protein localises to the secreted. In terms of biological role, alpha-conotoxins act on postsynaptic membranes, they bind to the nicotinic acetylcholine receptors (nAChR) and thus inhibit them. This toxin blocks the rat muscle nAChRs alpha-1-beta-1-gamma-delta (CHRNA1-CHRNB1-CHRNG-CHRND) (IC(50)=5.7 nM) and the rat neuronal nAChR alpha-3-beta-2/CHRNA3-CHRNB2 (IC(50)=2060 nM). In vivo, intramuscular injection into zebrafish produces rapid flaccid paralysis. The chain is Alpha-conotoxin CIA from Conus catus (Cat cone).